We begin with the raw amino-acid sequence, 366 residues long: A-type ATP synthase subunit C (366 aa).

This sequence belongs to the V-ATPase V0D/AC39 subunit family. Has multiple subunits with at least A(3), B(3), C, D, E, F, H, I and proteolipid K(x).

It is found in the cell membrane. Component of the A-type ATP synthase that produces ATP from ADP in the presence of a proton gradient across the membrane. This Thermococcus gammatolerans (strain DSM 15229 / JCM 11827 / EJ3) protein is A-type ATP synthase subunit C.